The chain runs to 137 residues: 1,4-dihydroxy-2-naphthoyl-CoA hydrolase (137 aa).

Residue aspartate 12 is part of the active site.

This sequence belongs to the 4-hydroxybenzoyl-CoA thioesterase family. DHNA-CoA hydrolase subfamily.

It carries out the reaction 1,4-dihydroxy-2-naphthoyl-CoA + H2O = 1,4-dihydroxy-2-naphthoate + CoA + H(+). Its pathway is cofactor biosynthesis; phylloquinone biosynthesis. It participates in quinol/quinone metabolism; 1,4-dihydroxy-2-naphthoate biosynthesis; 1,4-dihydroxy-2-naphthoate from chorismate: step 7/7. Catalyzes the hydrolysis of 1,4-dihydroxy-2-naphthoyl-CoA (DHNA-CoA) to 1,4-dihydroxy-2-naphthoate (DHNA), a reaction involved in phylloquinone (vitamin K1) biosynthesis. This is 1,4-dihydroxy-2-naphthoyl-CoA hydrolase from Acaryochloris marina (strain MBIC 11017).